The primary structure comprises 601 residues: Aspartate--tRNA ligase (601 aa).

Glutamate 183 contributes to the L-aspartate binding site. Positions 207–210 (QIFK) are aspartate. Residue arginine 229 participates in L-aspartate binding. ATP-binding positions include 229–231 (RDE) and glutamine 238. Histidine 457 lines the L-aspartate pocket. Residue glutamate 497 participates in ATP binding. Arginine 504 contributes to the L-aspartate binding site. 549-552 (GIDR) is a binding site for ATP.

Belongs to the class-II aminoacyl-tRNA synthetase family. Type 1 subfamily. Homodimer.

It is found in the cytoplasm. It catalyses the reaction tRNA(Asp) + L-aspartate + ATP = L-aspartyl-tRNA(Asp) + AMP + diphosphate. Its function is as follows. Catalyzes the attachment of L-aspartate to tRNA(Asp) in a two-step reaction: L-aspartate is first activated by ATP to form Asp-AMP and then transferred to the acceptor end of tRNA(Asp). This is Aspartate--tRNA ligase from Leptospira interrogans serogroup Icterohaemorrhagiae serovar Lai (strain 56601).